The chain runs to 122 residues: Small ribosomal subunit protein uS13 (122 aa).

The tract at residues 99–122 (RGQRTHTNARTRKGPAKAIAGKKK) is disordered.

This sequence belongs to the universal ribosomal protein uS13 family. As to quaternary structure, part of the 30S ribosomal subunit. Forms a loose heterodimer with protein S19. Forms two bridges to the 50S subunit in the 70S ribosome.

Its function is as follows. Located at the top of the head of the 30S subunit, it contacts several helices of the 16S rRNA. In the 70S ribosome it contacts the 23S rRNA (bridge B1a) and protein L5 of the 50S subunit (bridge B1b), connecting the 2 subunits; these bridges are implicated in subunit movement. Contacts the tRNAs in the A and P-sites. The chain is Small ribosomal subunit protein uS13 from Cereibacter sphaeroides (strain ATCC 17029 / ATH 2.4.9) (Rhodobacter sphaeroides).